Reading from the N-terminus, the 315-residue chain is Probable cell division protein WhiA (315 aa).

Residues 280-313 constitute a DNA-binding region (H-T-H motif); that stretch reads SLKELGDLLDPPLSKSGVAYRMRKLEESVKEILQ.

It belongs to the WhiA family.

Functionally, involved in cell division and chromosome segregation. The sequence is that of Probable cell division protein WhiA from Syntrophomonas wolfei subsp. wolfei (strain DSM 2245B / Goettingen).